The sequence spans 161 residues: Nucleotide-binding protein PputW619_0959 (161 aa).

Belongs to the YajQ family.

Functionally, nucleotide-binding protein. This Pseudomonas putida (strain W619) protein is Nucleotide-binding protein PputW619_0959.